Consider the following 155-residue polypeptide: Large ribosomal subunit protein uL22c (155 aa).

The protein belongs to the universal ribosomal protein uL22 family. As to quaternary structure, part of the 50S ribosomal subunit.

The protein resides in the plastid. It localises to the chloroplast. This protein binds specifically to 23S rRNA. In terms of biological role, the globular domain of the protein is located near the polypeptide exit tunnel on the outside of the subunit, while an extended beta-hairpin is found that lines the wall of the exit tunnel in the center of the 70S ribosome. The polypeptide is Large ribosomal subunit protein uL22c (rpl22) (Atropa belladonna (Belladonna)).